The sequence spans 205 residues: MTKRSEAKYKIDRRMGQNIWGRPKSPVNRREYGPGQHGQRRKGKLSDFGVQLRAKQKLKGYYANISERQFHGIYVEAGRLKGDTGENLIGILERRLDTVVFRAKFVSTMFAARQFINHGHIKVNGRKVNIASYQVKPGDVIEVKEASKQLAVVLEATQLAERDVPDYIEADHSKMTAKFIRIPALSDVPFAVQMEPHLIVEFYSR.

The disordered stretch occupies residues 18–46 (NIWGRPKSPVNRREYGPGQHGQRRKGKLS). The region spanning 94–154 (RRLDTVVFRA…EASKQLAVVL (61 aa)) is the S4 RNA-binding domain.

The protein belongs to the universal ribosomal protein uS4 family. Part of the 30S ribosomal subunit. Contacts protein S5. The interaction surface between S4 and S5 is involved in control of translational fidelity.

One of the primary rRNA binding proteins, it binds directly to 16S rRNA where it nucleates assembly of the body of the 30S subunit. Its function is as follows. With S5 and S12 plays an important role in translational accuracy. This Bradyrhizobium sp. (strain ORS 278) protein is Small ribosomal subunit protein uS4.